Consider the following 464-residue polypeptide: 3-isopropylmalate dehydratase large subunit (464 aa).

3 residues coordinate [4Fe-4S] cluster: cysteine 337, cysteine 397, and cysteine 400.

It belongs to the aconitase/IPM isomerase family. LeuC type 1 subfamily. In terms of assembly, heterodimer of LeuC and LeuD. It depends on [4Fe-4S] cluster as a cofactor.

It catalyses the reaction (2R,3S)-3-isopropylmalate = (2S)-2-isopropylmalate. It functions in the pathway amino-acid biosynthesis; L-leucine biosynthesis; L-leucine from 3-methyl-2-oxobutanoate: step 2/4. Functionally, catalyzes the isomerization between 2-isopropylmalate and 3-isopropylmalate, via the formation of 2-isopropylmaleate. The chain is 3-isopropylmalate dehydratase large subunit from Bacillus thuringiensis (strain Al Hakam).